The following is a 576-amino-acid chain: MSGGDGRGHNSGAHNTGGNINGGPTGLGGNGGASDGSGWSSENNPWGGGSGSGVHWGGGSGHGNGGGNSNSGGGSNSSVAAPMAFGFPALAAPGAGTLGISVSGEALSAAIADIFAALKGPFKFSAWGIALYGILPSEIAKDDPNMMSKIVTSLPAETVTNVQVSTLPLDQATVSVTKRVTDVVKDTRQHIAVVAGVPMSVPVVNAKPTRTPGVFHASFPGVPSLTVSTVKGLPVSTTLPRGITEDKGRTAVPAGFTFGGGSHEAVIRFPKESGQKPVYVSVTDVLTPAQVKQRQDEEKRLQQEWNDAHPVEVAERNYEQARAELNQANKDVARNQERQAKAVQVYNSRKSELDAANKTLADAKAEIKQFERFAREPMAAGHRMWQMAGLKAQRAQTDVNNKKAAFDAAAKEKSDADVALSSALERRKQKENKEKDAKAKLDKESKRNKPGKATGKGKPVNNKWLNNAGKDLGSPVPDRIANKLRDKEFKSFDDFRKKFWEEVSKDPELSKQFSRNNNDRMKVGKAPKTRTQDVSGKRTSFELHHEKPISQNGGVYDMDNISVVTPKRHIDIHRGK.

Disordered stretches follow at residues 1–75, 421–478, and 506–557; these read MSGG…GGGS, SSAL…PVPD, and DPEL…GVYD. Positions 19–35 are enriched in gly residues; that stretch reads NINGGPTGLGGNGGASD. The segment covering 36–45 has biased composition (low complexity); it reads GSGWSSENNP. Gly residues predominate over residues 46-75; sequence WGGGSGSGVHWGGGSGHGNGGGNSNSGGGS. 2 stretches are compositionally biased toward basic and acidic residues: residues 424-447 and 535-548; these read LERR…ESKR and SGKR…HEKP. Zn(2+) is bound by residues histidine 544, histidine 569, and histidine 573.

The protein belongs to the colicin/pyosin nuclease family.

Its function is as follows. This plasmid-coded bactericidal protein is an endonuclease active on both single- and double-stranded DNA but with undefined specificity. Colicins are polypeptide toxins produced by and active against E.coli and closely related bacteria. The sequence is that of Colicin-E7 (colE7) from Escherichia coli.